The sequence spans 87 residues: Selenoprotein W (87 aa).

A cross-link (cysteinyl-selenocysteine (Cys-Sec); redox-active) is located at residues 10–13 (CGAU). Position 13 (U13) is a non-standard amino acid, selenocysteine. S-glutathionyl cysteine is present on C37.

The protein belongs to the SelWTH family. Selenoprotein W subfamily. In terms of assembly, interacts with DPYSL2, PRDX1, YWHAB, YWHAG, HSP70 and HSP90.

Its subcellular location is the cytoplasm. In terms of biological role, plays a role as a glutathione (GSH)-dependent antioxidant. May be involved in a redox-related process. May play a role in the myopathies of selenium deficiency. This is Selenoprotein W from Sus scrofa (Pig).